A 370-amino-acid chain; its full sequence is DNA replication and repair protein RecF (370 aa).

Residue 30 to 37 (GENAQGKT) participates in ATP binding.

The protein belongs to the RecF family.

It localises to the cytoplasm. Its function is as follows. The RecF protein is involved in DNA metabolism; it is required for DNA replication and normal SOS inducibility. RecF binds preferentially to single-stranded, linear DNA. It also seems to bind ATP. The protein is DNA replication and repair protein RecF of Listeria monocytogenes serotype 4b (strain CLIP80459).